The chain runs to 428 residues: UDP-N-acetylglucosamine 1-carboxyvinyltransferase 2 (428 aa).

A phosphoenolpyruvate-binding site is contributed by 22 to 23 (KN). Residue Arg92 coordinates UDP-N-acetyl-alpha-D-glucosamine. The active-site Proton donor is the Cys116. 2-(S-cysteinyl)pyruvic acid O-phosphothioketal is present on Cys116. Residues 121-125 (RPIDQ), Asp304, and Ile326 each bind UDP-N-acetyl-alpha-D-glucosamine.

Belongs to the EPSP synthase family. MurA subfamily.

The protein resides in the cytoplasm. It carries out the reaction phosphoenolpyruvate + UDP-N-acetyl-alpha-D-glucosamine = UDP-N-acetyl-3-O-(1-carboxyvinyl)-alpha-D-glucosamine + phosphate. Its pathway is cell wall biogenesis; peptidoglycan biosynthesis. Cell wall formation. Adds enolpyruvyl to UDP-N-acetylglucosamine. The protein is UDP-N-acetylglucosamine 1-carboxyvinyltransferase 2 of Shouchella clausii (strain KSM-K16) (Alkalihalobacillus clausii).